The chain runs to 337 residues: Methylthioribose-1-phosphate isomerase (337 aa).

Substrate-binding positions include 47–49 (RGA), arginine 81, and glutamine 184. Aspartate 225 serves as the catalytic Proton donor. 235-236 (NK) is a binding site for substrate.

The protein belongs to the eIF-2B alpha/beta/delta subunits family. MtnA subfamily.

The catalysed reaction is 5-(methylsulfanyl)-alpha-D-ribose 1-phosphate = 5-(methylsulfanyl)-D-ribulose 1-phosphate. It participates in amino-acid biosynthesis; L-methionine biosynthesis via salvage pathway; L-methionine from S-methyl-5-thio-alpha-D-ribose 1-phosphate: step 1/6. In terms of biological role, catalyzes the interconversion of methylthioribose-1-phosphate (MTR-1-P) into methylthioribulose-1-phosphate (MTRu-1-P). The protein is Methylthioribose-1-phosphate isomerase of Synechococcus sp. (strain CC9605).